We begin with the raw amino-acid sequence, 221 residues long: Telomere repeats-binding bouquet formation protein 2 (221 aa).

The protein belongs to the TERB2 family. Component of the MAJIN-TERB1-TERB2 complex, composed of MAJIN, TERB1 and TERB2.

It localises to the chromosome. The protein localises to the telomere. Its subcellular location is the nucleus inner membrane. Meiosis-specific telomere-associated protein involved in meiotic telomere attachment to the nucleus inner membrane, a crucial step for homologous pairing and synapsis. Component of the MAJIN-TERB1-TERB2 complex, which promotes telomere cap exchange by mediating attachment of telomeric DNA to the inner nuclear membrane and replacement of the protective cap of telomeric chromosomes: in early meiosis, the MAJIN-TERB1-TERB2 complex associates with telomeric DNA and the shelterin/telosome complex. During prophase, the complex matures and promotes release of the shelterin/telosome complex from telomeric DNA. The polypeptide is Telomere repeats-binding bouquet formation protein 2 (Bos taurus (Bovine)).